A 267-amino-acid chain; its full sequence is Acyl-[acyl-carrier-protein]--UDP-N-acetylglucosamine O-acyltransferase (267 aa).

It belongs to the transferase hexapeptide repeat family. LpxA subfamily. As to quaternary structure, homotrimer.

It localises to the cytoplasm. It catalyses the reaction a (3R)-hydroxyacyl-[ACP] + UDP-N-acetyl-alpha-D-glucosamine = a UDP-3-O-[(3R)-3-hydroxyacyl]-N-acetyl-alpha-D-glucosamine + holo-[ACP]. It functions in the pathway glycolipid biosynthesis; lipid IV(A) biosynthesis; lipid IV(A) from (3R)-3-hydroxytetradecanoyl-[acyl-carrier-protein] and UDP-N-acetyl-alpha-D-glucosamine: step 1/6. Involved in the biosynthesis of lipid A, a phosphorylated glycolipid that anchors the lipopolysaccharide to the outer membrane of the cell. The protein is Acyl-[acyl-carrier-protein]--UDP-N-acetylglucosamine O-acyltransferase of Cupriavidus necator (strain ATCC 17699 / DSM 428 / KCTC 22496 / NCIMB 10442 / H16 / Stanier 337) (Ralstonia eutropha).